A 260-amino-acid polypeptide reads, in one-letter code: Adenosylcobinamide-GDP ribazoletransferase (260 aa).

The next 7 membrane-spanning stretches (helical) occupy residues 31–51, 57–77, 108–128, 131–151, 173–193, 206–226, and 240–260; these read FYFLPLIGGLIAGLVLIPIYF, IEISGFISLLLYLFLTGSIHL, YGTIGLNVFLLLRYINYSTII, AGLLILAGIISRLSGLAVVVF, FFFWLVLVCFLSLFTPEIAAF, LKYLLLPLTAFILTFIIIRIS, and LIVELTELAVLSTSFFINVHL.

Belongs to the CobS family. Requires Mg(2+) as cofactor.

It localises to the cell inner membrane. The catalysed reaction is alpha-ribazole + adenosylcob(III)inamide-GDP = adenosylcob(III)alamin + GMP + H(+). The enzyme catalyses alpha-ribazole 5'-phosphate + adenosylcob(III)inamide-GDP = adenosylcob(III)alamin 5'-phosphate + GMP + H(+). Its pathway is cofactor biosynthesis; adenosylcobalamin biosynthesis; adenosylcobalamin from cob(II)yrinate a,c-diamide: step 7/7. Functionally, joins adenosylcobinamide-GDP and alpha-ribazole to generate adenosylcobalamin (Ado-cobalamin). Also synthesizes adenosylcobalamin 5'-phosphate from adenosylcobinamide-GDP and alpha-ribazole 5'-phosphate. This chain is Adenosylcobinamide-GDP ribazoletransferase, found in Treponema denticola (strain ATCC 35405 / DSM 14222 / CIP 103919 / JCM 8153 / KCTC 15104).